The following is a 710-amino-acid chain: Mitochondrial intermediate peptidase (710 aa).

The N-terminal 33 residues, 1 to 33, are a transit peptide targeting the mitochondrion; sequence MLLAAGTRYAYRLCGRRAAAALQGRAGRSCARS. Residue lysine 124 is modified to N6-acetyllysine. Histidine 492 contacts Zn(2+). Glutamate 493 is a catalytic residue. The Zn(2+) site is built by histidine 496 and histidine 499.

Belongs to the peptidase M3 family. In terms of assembly, monomer. Zn(2+) serves as cofactor.

Its subcellular location is the mitochondrion matrix. It catalyses the reaction Release of an N-terminal octapeptide as second stage of processing of some proteins imported into the mitochondrion.. Activity is divalent cation-dependent. It is stimulated by manganese, magnesium or calcium ions and reversibly inhibited by zinc, cobalt and iron. In terms of biological role, cleaves proteins, imported into the mitochondrion, to their mature size. This chain is Mitochondrial intermediate peptidase (Mipep), found in Rattus norvegicus (Rat).